Reading from the N-terminus, the 320-residue chain is MVAKLTDVAKLAGVSPTTVSRVINRKGYLSEKTITKVQAAMKTLGYKPNNLARSLQGKSAKLIGLIFPNISHIFYSELIEYLEIELFKHGYKAIICNSQNNPDKERDYLEMLEANQVDGIISSSHNLGIDDYEKVSAPIIAFDRNLAPNIPIVSSDNFEGGRMAAKLLKKHGCQHPIMIAGKDNSNSPTGLRQLGFKSVFAQAPIFHLSGELSIIRKEMEIKVILQNEKPDGIFLSDDMTAILTMKIANQLNITIPHELKIIGYDGTHFVENYYPYLTTIRQPIKDIAHLLVDVLLKKIDHQDTPKDYILPVGLLSGESV.

One can recognise an HTH lacI-type domain in the interval M1–G57. A DNA-binding region (H-T-H motif) is located at residues L5–N24.

In terms of biological role, negative regulator of scrB expression. The protein is Sucrose operon repressor (scrR) of Streptococcus mutans serotype c (strain ATCC 700610 / UA159).